The primary structure comprises 247 residues: MDVISCSSNTLKGLYDISGVEVGQHLYWQIGGLQVHAQVLITSWVVIAILLGSAIIAVRNPQTIPTAGQNFFEYVLEFIRDVSKTQIGEEYGPWVPFIGTMFLFIFVSNWSGALLPWKIIQLPHGELAAPTNDINTTVALALLTSVAYFYAGLTKKGLGYFSKYIQPTPILLPINILEDFTKPLSLSFRLFGNILADELVVVVLVSLVPLVVPIPVMFLGLFTSGIQALIFATLAAAYIGESMEGHH.

5 helical membrane-spanning segments follow: residues 38 to 58 (QVLITSWVVIAILLGSAIIAV), 95 to 115 (VPFIGTMFLFIFVSNWSGALL), 134 to 154 (INTTVALALLTSVAYFYAGLT), 199 to 219 (LVVVVLVSLVPLVVPIPVMFL), and 220 to 240 (GLFTSGIQALIFATLAAAYIG).

This sequence belongs to the ATPase A chain family. As to quaternary structure, F-type ATPases have 2 components, CF(1) - the catalytic core - and CF(0) - the membrane proton channel. CF(1) has five subunits: alpha(3), beta(3), gamma(1), delta(1), epsilon(1). CF(0) has four main subunits: a, b, b' and c.

It localises to the plastid. The protein localises to the chloroplast thylakoid membrane. In terms of biological role, key component of the proton channel; it plays a direct role in the translocation of protons across the membrane. This chain is ATP synthase subunit a, chloroplastic, found in Carica papaya (Papaya).